Here is a 424-residue protein sequence, read N- to C-terminus: Caspase-2 (424 aa).

Positions 1 to 140 (MLGACGMQRY…IVEHSLDSGD (140 aa)) are excised as a propeptide. In terms of domain architecture, CARD spans 7–96 (MQRYHQEALK…QHLAEMILKT (90 aa)). Catalysis depends on residues His-248 and Cys-291. Residues 296-310 (TDRGVDQRDGKERSD) show a composition bias toward basic and acidic residues. A disordered region spans residues 296–325 (TDRGVDQRDGKERSDSPGCEESDANKEENL).

This sequence belongs to the peptidase C14A family. Heterotetramer that consists of two anti-parallel arranged heterodimers, each one formed by a p18 subunit and a p12 subunit.

The catalysed reaction is Strict requirement for an Asp residue at P1, with 316-Asp being essential for proteolytic activity and has a preferred cleavage sequence of Val-Asp-Val-Ala-Asp-|-.. Functionally, involved in the activation cascade of caspases responsible for apoptosis execution. Might function by either activating some proteins required for cell death or inactivating proteins necessary for cell survival. This chain is Caspase-2 (CASP2), found in Gallus gallus (Chicken).